The primary structure comprises 61 residues: Large ribosomal subunit protein uL30 (61 aa).

It belongs to the universal ribosomal protein uL30 family. Part of the 50S ribosomal subunit.

The polypeptide is Large ribosomal subunit protein uL30 (Mycobacterium sp. (strain KMS)).